The chain runs to 827 residues: uncharacterized protein (827 aa).

The region spanning 12–82 (FDADFEAILN…DMDIGVLSTG (71 aa)) is the PAS 1 domain. Residues 212–264 (LDVEFRLAAAEGGYSWYRSRAATRRAEDGSILRWYGTVEDIDDRRKMFEALKE) form the PAC 1 domain. A PAS 2 domain is found at 265–335 (SEARFRAIAD…RVFYQAFDLR (71 aa)). A PAC 2 domain is found at 338–390 (VRMEYRLKRAGGGSAWVIDIGQPRFASDGTFLGFVGIALDITERRNAEQERLL). The 134-residue stretch at 428 to 561 (TRLAILCLDL…GGGTIVQYEP (134 aa)) folds into the GGDEF domain. One can recognise an EAL domain in the interval 570–820 (RQRMKVSLRH…QAMALLKSRS (251 aa)).

This is an uncharacterized protein from Sinorhizobium fredii (strain NBRC 101917 / NGR234).